The chain runs to 506 residues: MQNFKELGISDNTVQSLESMGFKEPTPIQKDSIPYALQGIDILGQAQTGTGKTGAFGIPLIEKVVGKQGVQSLILAPTRELAMQVAEQLREFSRGQGVQVVTVFGGMPIERQIKALKKGPQIVVGTPGRVIDHLNRRTLKTDGIHTLILDEADEMMNMGFIDDMRFIMDKIPAVQRQTMLFSATMPKAIQALVQQFMKSPKIIKTMNNEMSDPQIEEFYTIVKELEKFDTFTNFLDVHQPELAIVFGRTKRRVDELTSALISKGYKAEGLHGDITQAKRLEVLKKFKNDQINILVATDVAARGLDISGVSHVYNFDIPQDTESYTHRIGRTGRAGKEGIAVTFVNPIEMDYIRQIEDANGRKMSALRPPHRKEVLQAREDDIKEKVENWMSKESESRLKRISTELLNEYNDVDLVAALLQELIEANDEVEVQLTFEKPLSRKGRNGKPSGSRNRNSKRGNPKFDSKSKRSKGYSSKKKSTKKFDRKEKSSGGSRPMKGRTFADHQK.

Positions 2–30 (QNFKELGISDNTVQSLESMGFKEPTPIQK) match the Q motif motif. The region spanning 33 to 203 (IPYALQGIDI…QQFMKSPKII (171 aa)) is the Helicase ATP-binding domain. Residue 46–53 (AQTGTGKT) participates in ATP binding. Residues 150 to 153 (DEAD) carry the DEAD box motif. The 162-residue stretch at 214-375 (QIEEFYTIVK…LRPPHRKEVL (162 aa)) folds into the Helicase C-terminal domain. Positions 436–506 (EKPLSRKGRN…KGRTFADHQK (71 aa)) are disordered. Positions 468-480 (KRSKGYSSKKKST) are enriched in basic residues.

This sequence belongs to the DEAD box helicase family. CshA subfamily. In terms of assembly, oligomerizes, may be a member of the RNA degradosome.

Its subcellular location is the cytoplasm. The enzyme catalyses ATP + H2O = ADP + phosphate + H(+). DEAD-box RNA helicase possibly involved in RNA degradation. Unwinds dsRNA in both 5'- and 3'-directions, has RNA-dependent ATPase activity. The sequence is that of DEAD-box ATP-dependent RNA helicase CshA from Staphylococcus aureus (strain MRSA252).